Consider the following 369-residue polypeptide: Histidinol-phosphate aminotransferase (369 aa).

Positions 1–39 (MSFGIDDLPVRDELRGKSPYGAPQLDVPVRLNTNENPYP) are disordered. N6-(pyridoxal phosphate)lysine is present on Lys230.

It belongs to the class-II pyridoxal-phosphate-dependent aminotransferase family. Histidinol-phosphate aminotransferase subfamily. As to quaternary structure, homodimer. The cofactor is pyridoxal 5'-phosphate.

The catalysed reaction is L-histidinol phosphate + 2-oxoglutarate = 3-(imidazol-4-yl)-2-oxopropyl phosphate + L-glutamate. It participates in amino-acid biosynthesis; L-histidine biosynthesis; L-histidine from 5-phospho-alpha-D-ribose 1-diphosphate: step 7/9. This chain is Histidinol-phosphate aminotransferase (hisC), found in Streptomyces avermitilis (strain ATCC 31267 / DSM 46492 / JCM 5070 / NBRC 14893 / NCIMB 12804 / NRRL 8165 / MA-4680).